Consider the following 622-residue polypeptide: Sodium-dependent serotonin transporter (622 aa).

The tract at residues 1-53 (MDRSGSSDFAGAAATTGRSNPAPWSDDKESPNNEDDSNEDDGDHTTPAKVTDP) is disordered. Residues 1–82 (MDRSGSSDFA…TRETWGQKAE (82 aa)) are Cytoplasmic-facing. Residues 32 to 42 (NNEDDSNEDDG) show a composition bias toward acidic residues. The next 3 helical transmembrane spans lie at 83–103 (FLLAVIGFAVDLGNVWRFPYI), 111–130 (AFLVPYCLFLIFGGLPLFYM), and 155–175 (GVGYAICLIDIYMGMYYNTII). The Na(+) site is built by G89, A91, V92, and N96. Over 176–244 (GWAVYYLFAS…NGLDFMGPVK (69 aa)) the chain is Extracellular. C195 and C204 are oxidised to a cystine. The N-linked (GlcNAc...) asparagine glycan is linked to N211. Helical transmembrane passes span 245–263 (PTLALCVFGVFVLVYFSLW), 272–289 (VVWVTALAPYVVLIILLV), 325–342 (IFFSLGPGFGTLLALSSY), 354–375 (LITSSINCLTSFLAGFVIFSVL), and 408–427 (MSGSVFWSIIFFLMLITLGL). Positions 328, 360, 425, 428, and 429 each coordinate Na(+). 4 helical membrane passes run 455 to 473 (LFVLLLLAFIFLCALPTMT), 489 to 509 (GLAILFVVFVEAAGVFWFYGV), 530 to 549 (ICWTYISPVFLLTIFIFSIM), and 568 to 586 (VGWAVTCSSVLCIPMYIIY). Topologically, residues 587–622 (KFFFASKGGCRQRLQESFQPEDNCGSVVPGQQGTSV) are cytoplasmic.

The protein belongs to the sodium:neurotransmitter symporter (SNF) (TC 2.A.22) family. Expression is specific to cell bodies in the ventral ganglion of the embryonic and larval nervous system.

It is found in the cell membrane. In terms of biological role, terminates the action of serotonin by its high affinity sodium-dependent reuptake into presynaptic terminals. The protein is Sodium-dependent serotonin transporter (SerT) of Drosophila melanogaster (Fruit fly).